We begin with the raw amino-acid sequence, 496 residues long: DNA-directed DNA/RNA polymerase mu (496 aa).

The interval 1 to 22 (MLPKRRRVRAGSPHSAVASSTP) is disordered. Residue serine 12 is modified to Phosphoserine. The segment covering 12 to 22 (SPHSAVASSTP) has biased composition (low complexity). The 100-residue stretch at 23–122 (PSVVRFPDVA…QPVPEEGRHH (100 aa)) folds into the BRCT domain. The Na(+) site is built by threonine 241 and valine 243. The tract at residues 323–332 (RGKLQGHDVD) is involved in ssDNA binding. 3 residues coordinate Mg(2+): aspartate 330, aspartate 332, and aspartate 420.

The protein belongs to the DNA polymerase type-X family. Mg(2+) is required as a cofactor.

The protein resides in the nucleus. It catalyses the reaction DNA(n) + a 2'-deoxyribonucleoside 5'-triphosphate = DNA(n+1) + diphosphate. Gap-filling polymerase involved in repair of DNA double-strand breaks by non-homologous end joining (NHEJ). Participates in immunoglobulin (Ig) light chain gene rearrangement in V(D)J recombination. The sequence is that of DNA-directed DNA/RNA polymerase mu (Polm) from Mus musculus (Mouse).